Consider the following 208-residue polypeptide: Uridine kinase (208 aa).

11–18 (GGSGSGKT) serves as a coordination point for ATP.

The protein belongs to the uridine kinase family.

The protein localises to the cytoplasm. The enzyme catalyses uridine + ATP = UMP + ADP + H(+). The catalysed reaction is cytidine + ATP = CMP + ADP + H(+). The protein operates within pyrimidine metabolism; CTP biosynthesis via salvage pathway; CTP from cytidine: step 1/3. It functions in the pathway pyrimidine metabolism; UMP biosynthesis via salvage pathway; UMP from uridine: step 1/1. The sequence is that of Uridine kinase from Staphylococcus carnosus (strain TM300).